We begin with the raw amino-acid sequence, 356 residues long: Outer membrane protein Omp38 (356 aa).

An N-terminal signal peptide occupies residues M1–A19. Residues E221–R339 enclose the OmpA-like domain. The meso-2,6-diaminopimelate site is built by N237, D271, T273, N279, and R286.

It belongs to the outer membrane OOP (TC 1.B.6) superfamily. In terms of assembly, homotrimer. Forms a pore with a size of 1.3 nm.

Its subcellular location is the cell outer membrane. The protein localises to the host mitochondrion. Its function is as follows. Functions as a porin. Induces apoptosis in human cell lines through caspase-dependent and AIF-dependent pathways. Purified Omp38 enters host cell and localizes to the mitochondria, which presumably leads to a release of proapoptotic molecules such as cytochrome c and AIF (apoptosis-inducing factor). Binds peptidoglycan, contributes to cell wall maintenance. The polypeptide is Outer membrane protein Omp38 (Acinetobacter baumannii (strain ATCC 19606 / DSM 30007 / JCM 6841 / CCUG 19606 / CIP 70.34 / NBRC 109757 / NCIMB 12457 / NCTC 12156 / 81)).